Reading from the N-terminus, the 524-residue chain is Cytochrome P450 1A1 (524 aa).

The tract at residues 33-44 is mitochondrial targeting signal; the sequence is WQPRLPKGLKSP. S71 is a glycosylation site (O-linked (GlcNAc) serine). Position 228 (F228) interacts with substrate. C461 is a heme binding site.

This sequence belongs to the cytochrome P450 family. As to quaternary structure, interacts with cytosolic chaperones HSP70 and HSP90; this interaction is required for initial targeting to mitochondria. Interacts (via mitochondrial targeting signal) with TOMM40 (via N-terminus); this interaction is required for translocation across the mitochondrial outer membrane. The cofactor is heme.

The protein localises to the endoplasmic reticulum membrane. It localises to the mitochondrion inner membrane. Its subcellular location is the microsome membrane. The protein resides in the cytoplasm. It carries out the reaction an organic molecule + reduced [NADPH--hemoprotein reductase] + O2 = an alcohol + oxidized [NADPH--hemoprotein reductase] + H2O + H(+). The catalysed reaction is estrone + reduced [NADPH--hemoprotein reductase] + O2 = 2-hydroxyestrone + oxidized [NADPH--hemoprotein reductase] + H2O + H(+). The enzyme catalyses estrone + reduced [NADPH--hemoprotein reductase] + O2 = 4-hydroxyestrone + oxidized [NADPH--hemoprotein reductase] + H2O + H(+). It catalyses the reaction estrone + reduced [NADPH--hemoprotein reductase] + O2 = 6alpha-hydroxyestrone + oxidized [NADPH--hemoprotein reductase] + H2O + H(+). It carries out the reaction estrone + reduced [NADPH--hemoprotein reductase] + O2 = 15alpha-hydroxyestrone + oxidized [NADPH--hemoprotein reductase] + H2O + H(+). The catalysed reaction is estrone + reduced [NADPH--hemoprotein reductase] + O2 = 16alpha-hydroxyestrone + oxidized [NADPH--hemoprotein reductase] + H2O + H(+). The enzyme catalyses 17beta-estradiol + reduced [NADPH--hemoprotein reductase] + O2 = 2-hydroxy-17beta-estradiol + oxidized [NADPH--hemoprotein reductase] + H2O + H(+). It catalyses the reaction 17beta-estradiol + reduced [NADPH--hemoprotein reductase] + O2 = 4-hydroxy-17beta-estradiol + oxidized [NADPH--hemoprotein reductase] + H2O + H(+). It carries out the reaction 17beta-estradiol + reduced [NADPH--hemoprotein reductase] + O2 = 6alpha-hydroxy-17beta-estradiol + oxidized [NADPH--hemoprotein reductase] + H2O + H(+). The catalysed reaction is 17beta-estradiol + reduced [NADPH--hemoprotein reductase] + O2 = 7alpha-hydroxy-17beta-estradiol + oxidized [NADPH--hemoprotein reductase] + H2O + H(+). The enzyme catalyses 17beta-estradiol + reduced [NADPH--hemoprotein reductase] + O2 = 15alpha-hydroxy-17beta-estradiol + oxidized [NADPH--hemoprotein reductase] + H2O + H(+). It catalyses the reaction (5Z,8Z,11Z)-eicosatrienoate + reduced [NADPH--hemoprotein reductase] + O2 = 19-hydroxy-(5Z,8Z,11Z)-eicosatrienoate + oxidized [NADPH--hemoprotein reductase] + H2O + H(+). It carries out the reaction (5Z,8Z,11Z,14Z)-eicosatetraenoate + reduced [NADPH--hemoprotein reductase] + O2 = 16-hydroxy-(5Z,8Z,11Z,14Z)-eicosatetraenoate + oxidized [NADPH--hemoprotein reductase] + H2O + H(+). The catalysed reaction is (5Z,8Z,11Z,14Z)-eicosatetraenoate + reduced [NADPH--hemoprotein reductase] + O2 = 17-hydroxy-(5Z,8Z,11Z,14Z)-eicosatetraenoate + oxidized [NADPH--hemoprotein reductase] + H2O + H(+). The enzyme catalyses (5Z,8Z,11Z,14Z)-eicosatetraenoate + reduced [NADPH--hemoprotein reductase] + O2 = 18-hydroxy-(5Z,8Z,11Z,14Z)-eicosatetraenoate + oxidized [NADPH--hemoprotein reductase] + H2O + H(+). It catalyses the reaction (5Z,8Z,11Z,14Z)-eicosatetraenoate + reduced [NADPH--hemoprotein reductase] + O2 = 19-hydroxy-(5Z,8Z,11Z,14Z)-eicosatetraenoate + oxidized [NADPH--hemoprotein reductase] + H2O + H(+). It carries out the reaction (5Z,8Z,11Z,14Z,17Z)-eicosapentaenoate + reduced [NADPH--hemoprotein reductase] + O2 = 19-hydroxy-(5Z,8Z,11Z,14Z,17Z)-eicosapentaenoate + oxidized [NADPH--hemoprotein reductase] + H2O + H(+). The catalysed reaction is (5Z,8Z,11Z,14Z)-eicosatetraenoate + reduced [NADPH--hemoprotein reductase] + O2 = (8R,9S)-epoxy-(5Z,11Z,14Z)-eicosatrienoate + oxidized [NADPH--hemoprotein reductase] + H2O + H(+). The enzyme catalyses (5Z,8Z,11Z,14Z)-eicosatetraenoate + reduced [NADPH--hemoprotein reductase] + O2 = (11R,12S)-epoxy-(5Z,8Z,14Z)-eicosatrienoate + oxidized [NADPH--hemoprotein reductase] + H2O + H(+). It catalyses the reaction (5Z,8Z,11Z,14Z)-eicosatetraenoate + reduced [NADPH--hemoprotein reductase] + O2 = (14S,15R)-epoxy-(5Z,8Z,11Z)-eicosatrienoate + oxidized [NADPH--hemoprotein reductase] + H2O + H(+). It carries out the reaction (5Z,8Z,11Z,14Z)-eicosatetraenoate + reduced [NADPH--hemoprotein reductase] + O2 = (14R,15S)-epoxy-(5Z,8Z,11Z)-eicosatrienoate + oxidized [NADPH--hemoprotein reductase] + H2O + H(+). The catalysed reaction is (5Z,8Z,11Z,14Z,17Z)-eicosapentaenoate + reduced [NADPH--hemoprotein reductase] + O2 = (17R,18S)-epoxy-(5Z,8Z,11Z,14Z)-eicosatetraenoate + oxidized [NADPH--hemoprotein reductase] + H2O + H(+). The enzyme catalyses (4Z,7Z,10Z,13Z,16Z,19Z)-docosahexaenoate + reduced [NADPH--hemoprotein reductase] + O2 = (19S,20R)-epoxy-(4Z,7Z,10Z,13Z,16Z)-docosapentaenoate + oxidized [NADPH--hemoprotein reductase] + H2O + H(+). It catalyses the reaction (4Z,7Z,10Z,13Z,16Z,19Z)-docosahexaenoate + reduced [NADPH--hemoprotein reductase] + O2 = (19R,20S)-epoxy-(4Z,7Z,10Z,13Z,16Z)-docosapentaenoate + oxidized [NADPH--hemoprotein reductase] + H2O + H(+). It carries out the reaction all-trans-retinol + reduced [NADPH--hemoprotein reductase] + O2 = all-trans-retinal + oxidized [NADPH--hemoprotein reductase] + 2 H2O + H(+). The catalysed reaction is all-trans-retinal + reduced [NADPH--hemoprotein reductase] + O2 = all-trans-retinoate + oxidized [NADPH--hemoprotein reductase] + H2O + 2 H(+). The enzyme catalyses (13S)-hydroperoxy-(9Z,11E)-octadecadienoate = 13-oxo-(9Z,11E)-octadecadienoate + H2O. It catalyses the reaction (12S)-hydroperoxy-(5Z,8Z,10E,14Z)-eicosatetraenoate = 12-oxo-(5Z,8Z,10E,14Z)-eicosatetraenoate + H2O. It carries out the reaction (15S)-hydroperoxy-(5Z,8Z,11Z,13E)-eicosatetraenoate = 15-oxo-(5Z,8Z,11Z,13E)-eicosatetraenoate + H2O. The catalysed reaction is (5S)-hydroperoxy-(6E,8Z,11Z,14Z)-eicosatetraenoate = 5-oxo-(6E,8Z,11Z,14Z)-eicosatetraenoate + H2O. The protein operates within steroid hormone biosynthesis. It functions in the pathway lipid metabolism; fatty acid metabolism. It participates in cofactor metabolism; retinol metabolism. Functionally, a cytochrome P450 monooxygenase involved in the metabolism of various endogenous substrates, including fatty acids, steroid hormones and vitamins. Mechanistically, uses molecular oxygen inserting one oxygen atom into a substrate, and reducing the second into a water molecule, with two electrons provided by NADPH via cytochrome P450 reductase (CPR; NADPH-ferrihemoprotein reductase). Catalyzes the hydroxylation of carbon-hydrogen bonds. Exhibits high catalytic activity for the formation of hydroxyestrogens from estrone (E1) and 17beta-estradiol (E2), namely 2-hydroxy E1 and E2, as well as D-ring hydroxylated E1 and E2 at the C15alpha and C16alpha positions. Displays different regioselectivities for polyunsaturated fatty acids (PUFA) hydroxylation. Catalyzes the epoxidation of double bonds of certain PUFA. Converts arachidonic acid toward epoxyeicosatrienoic acid (EET) regioisomers, 8,9-, 11,12-, and 14,15-EET, that function as lipid mediators in the vascular system. Displays an absolute stereoselectivity in the epoxidation of eicosapentaenoic acid (EPA) producing the 17(R),18(S) enantiomer. May play an important role in all-trans retinoic acid biosynthesis in extrahepatic tissues. Catalyzes two successive oxidative transformation of all-trans retinol to all-trans retinal and then to the active form all-trans retinoic acid. May also participate in eicosanoids metabolism by converting hydroperoxide species into oxo metabolites (lipoxygenase-like reaction, NADPH-independent). In Canis lupus familiaris (Dog), this protein is Cytochrome P450 1A1 (CYP1A1).